The primary structure comprises 196 residues: Endonuclease V (196 aa).

Mg(2+) contacts are provided by Asp37 and Asp98.

It belongs to the endonuclease V family. Requires Mg(2+) as cofactor.

The protein localises to the cytoplasm. It catalyses the reaction Endonucleolytic cleavage at apurinic or apyrimidinic sites to products with a 5'-phosphate.. Its function is as follows. DNA repair enzyme involved in the repair of deaminated bases. Selectively cleaves double-stranded DNA at the second phosphodiester bond 3' to a deoxyinosine leaving behind the intact lesion on the nicked DNA. This Sulfurisphaera tokodaii (strain DSM 16993 / JCM 10545 / NBRC 100140 / 7) (Sulfolobus tokodaii) protein is Endonuclease V.